A 436-amino-acid polypeptide reads, in one-letter code: GTPase Der (436 aa).

2 EngA-type G domains span residues 4 to 167 and 176 to 351; these read PVVA…KDEE and IKLS…ENHK. GTP contacts are provided by residues 10-17, 57-61, 119-122, 182-189, 229-233, and 294-297; these read GRPNVGKS, DTGGI, NKVD, DTAGM, and NKWD. The region spanning 352–436 is the KH-like domain; sequence KRVQSSTLNE…PIRIIPRKRN (85 aa).

The protein belongs to the TRAFAC class TrmE-Era-EngA-EngB-Septin-like GTPase superfamily. EngA (Der) GTPase family. As to quaternary structure, associates with the 50S ribosomal subunit.

Functionally, GTPase that plays an essential role in the late steps of ribosome biogenesis. The polypeptide is GTPase Der (Staphylococcus carnosus (strain TM300)).